The sequence spans 397 residues: P2X purinoceptor 3 (397 aa).

The Cytoplasmic segment spans residues 1-20 (MNCISDFFTYETTKSVVVKS). Residues 21–43 (WTIGIINRVVQLLIISYFVGWVF) traverse the membrane as a helical segment. Residues 44–322 (LHEKAYQVRD…AGKFNIIPTI (279 aa)) lie on the Extracellular side of the membrane. ATP contacts are provided by Lys63 and Lys65. Disulfide bonds link Cys107-Cys153, Cys116-Cys137, and Cys122-Cys147. Glu111 is a Mg(2+) binding site. N-linked (GlcNAc...) asparagine glycosylation is present at Asn139. Residue Asp158 participates in Mg(2+) binding. Asp158 contributes to the Ca(2+) binding site. The N-linked (GlcNAc...) asparagine glycan is linked to Asn170. Thr172 is a binding site for ATP. N-linked (GlcNAc...) asparagine glycosylation occurs at Asn194. 2 disulfide bridges follow: Cys203–Cys213 and Cys247–Cys256. Ser275, Asn279, and Arg281 together coordinate ATP. An N-linked (GlcNAc...) asparagine glycan is attached at Asn290. Residue Lys299 coordinates ATP. Residues 323 to 341 (ISSVAAFTSVGVGTVLCDI) traverse the membrane as a helical segment. The Cytoplasmic portion of the chain corresponds to 342–397 (ILLNFLKGADQYKAKKFEEVNETTLKIAALTNPVYPSDQTTAEKQSTDSGAFSIGH). Residues 378 to 391 (SDQTTAEKQSTDSG) are compositionally biased toward polar residues. A disordered region spans residues 378 to 397 (SDQTTAEKQSTDSGAFSIGH).

It belongs to the P2X receptor family. As to quaternary structure, homotrimer. Forms heterotrimer with P2RX2. Heterotrimeric P2RX2/3 has a ligand dose-response profile that is distinct from either homotrimeric P2RX2 or P2RX3.

Its subcellular location is the cell membrane. It carries out the reaction Ca(2+)(in) = Ca(2+)(out). The enzyme catalyses Na(+)(in) = Na(+)(out). With respect to regulation, has high sensitivity to ATP. Fast activation by external ATP. Exhibits rapid desensitization. Sensitives to the ATP agonist:alpha/beta-methylene-ATP. Subject to allosteric inhibition by AF-219. Mg(2+) and Ca(2+) slow deactivation of P2RX3. Extracellular ATP-activated non-selective cation channel. Plays particularly important role in sensory neurons where its activation is critical for gustatory, nociceptive responses, visceral reflexes and sensory hypersensitization. This Homo sapiens (Human) protein is P2X purinoceptor 3 (P2RX3).